We begin with the raw amino-acid sequence, 333 residues long: Heat shock transcription factor, X-linked member 4 (333 aa).

A disordered region spans residues 1 to 66 (MASQNTEQEY…QDNSPPEDRN (66 aa)). Residues 29-39 (GSSPDPNPDSS) show a composition bias toward low complexity. The segment covering 49 to 60 (AMSQDPGSQDNS) has biased composition (polar residues). Residues 79-182 (FRLSFPRKLW…PRLLENIQRK (104 aa)) mediate DNA binding. A disordered region spans residues 227–275 (QGAPSVQGPSGTQSFRRSGMWSKKSATRHPLGNGPPQEPNGPSWEGTSG). Over residues 228–242 (GAPSVQGPSGTQSFR) the composition is skewed to polar residues.

Belongs to the HSF family.

Its subcellular location is the nucleus. The sequence is that of Heat shock transcription factor, X-linked member 4 from Homo sapiens (Human).